The primary structure comprises 359 residues: MKTLTVHTPSHSYPIFIGNGLLPQAGSLLKPHLGKRAAIITNETVAPLYLGTLQTALDAAGVSHFSIILPDGEAHKNWQTLNLIFDGLMQNRAERKTTLIALGGGVIGDMVGFAAATYQRGAPFIQIPTTLLSQVDSSVGGKTAINHPLGKNMIGAFYQPQAVLADLDTLHTLPARELSAGMAEVIKYGALGDIGFFEWLEQHMPELMALERAPLTQAVYRCCQMKADIVAQDETEQGIRAWLNLGHTFGHAVEAEMGYGVWLHGEAVAAGCVLAARLSEQLGKTSAADTARLAALLEAAGLPSAPPVFAFEKWLAHMSHDKKVSGGIMRFIGLNRLGEAVITEITDTDILRRTLQPYL.

Residues 71-76 (DGEAHK), 105-109 (GVIGD), 129-130 (TT), Lys142, Lys151, and 169-172 (TLHT) contribute to the NAD(+) site. Zn(2+) is bound by residues Glu184, His247, and His264.

Belongs to the sugar phosphate cyclases superfamily. Dehydroquinate synthase family. Requires Co(2+) as cofactor. Zn(2+) serves as cofactor. NAD(+) is required as a cofactor.

Its subcellular location is the cytoplasm. It catalyses the reaction 7-phospho-2-dehydro-3-deoxy-D-arabino-heptonate = 3-dehydroquinate + phosphate. Its pathway is metabolic intermediate biosynthesis; chorismate biosynthesis; chorismate from D-erythrose 4-phosphate and phosphoenolpyruvate: step 2/7. Its function is as follows. Catalyzes the conversion of 3-deoxy-D-arabino-heptulosonate 7-phosphate (DAHP) to dehydroquinate (DHQ). The protein is 3-dehydroquinate synthase of Neisseria gonorrhoeae (strain ATCC 700825 / FA 1090).